We begin with the raw amino-acid sequence, 131 residues long: Glycine cleavage system H protein (131 aa).

The Lipoyl-binding domain occupies 24 to 106; it reads RAIVGVSDHA…YGEGWIMVIE (83 aa). At Lys65 the chain carries N6-lipoyllysine.

Belongs to the GcvH family. In terms of assembly, the glycine cleavage system is composed of four proteins: P, T, L and H. It depends on (R)-lipoate as a cofactor.

In terms of biological role, the glycine cleavage system catalyzes the degradation of glycine. The H protein shuttles the methylamine group of glycine from the P protein to the T protein. The protein is Glycine cleavage system H protein of Xylella fastidiosa (strain Temecula1 / ATCC 700964).